We begin with the raw amino-acid sequence, 344 residues long: Sorting nexin-16 (344 aa).

Residues M1 to M10 show a composition bias toward pro residues. Residues M1 to L72 form a disordered region. A compositionally biased stretch (polar residues) spans N14–R26. Residues S27–S40 show a composition bias toward low complexity. The segment covering L52 to C68 has biased composition (polar residues). Residues D105–G218 form the PX domain. Residues R144, T146, and R184 each coordinate a 1,2-diacyl-sn-glycero-3-phospho-(1D-myo-inositol-3-phosphate). The residue at position 222 (S222) is a Phosphoserine. Positions L223–E278 form a coiled coil.

Belongs to the sorting nexin family. As to quaternary structure, homooligomer. Interacts with EGFR.

The protein resides in the early endosome membrane. Its subcellular location is the late endosome membrane. It localises to the cytoplasm. The protein localises to the lysosome. May be involved in several stages of intracellular trafficking. Plays a role in protein transport from early to late endosomes. Plays a role in protein transport to the lysosome. Promotes degradation of EGFR after EGF signaling. The chain is Sorting nexin-16 (Snx16) from Mus musculus (Mouse).